Consider the following 323-residue polypeptide: Biotin synthase (323 aa).

In terms of domain architecture, Radical SAM core spans 46–264; that stretch reads TEIQLSSLLS…IAVARITMPR (219 aa). Residues C61, C65, and C68 each coordinate [4Fe-4S] cluster. 4 residues coordinate [2Fe-2S] cluster: C105, C136, C196, and R268.

Belongs to the radical SAM superfamily. Biotin synthase family. Homodimer. Requires [4Fe-4S] cluster as cofactor. It depends on [2Fe-2S] cluster as a cofactor.

It carries out the reaction (4R,5S)-dethiobiotin + (sulfur carrier)-SH + 2 reduced [2Fe-2S]-[ferredoxin] + 2 S-adenosyl-L-methionine = (sulfur carrier)-H + biotin + 2 5'-deoxyadenosine + 2 L-methionine + 2 oxidized [2Fe-2S]-[ferredoxin]. The protein operates within cofactor biosynthesis; biotin biosynthesis; biotin from 7,8-diaminononanoate: step 2/2. In terms of biological role, catalyzes the conversion of dethiobiotin (DTB) to biotin by the insertion of a sulfur atom into dethiobiotin via a radical-based mechanism. The polypeptide is Biotin synthase (Bordetella avium (strain 197N)).